The sequence spans 748 residues: Transducin-like enhancer protein 4 (748 aa).

Disordered regions lie at residues 1–20 and 157–332; these read MIRD…PHQP and LPIK…DPLA. The interval 1–112 is q domain; that stretch reads MIRDLSKMYR…SQEQQQLQAQ (112 aa). Residues 113–179 are GP domain; that stretch reads HLLTWTWSAC…HQRDRDSIKS (67 aa). Positions 158-177 are enriched in basic and acidic residues; sequence PIKDEKKHHDNDHQRDRDSI. The segment covering 178–189 has biased composition (low complexity); that stretch reads KSSSVSPSASFR. Residues 180 to 249 are ccN domain; that stretch reads SSVSPSASFR…SPRGSPAHSP (70 aa). Phosphoserine is present on residues S183, S187, S191, and S197. The span at 190 to 227 shows a compositional bias: basic and acidic residues; sequence GSEKHRNSTDYSSESKKQKTEEKEIAARYDSDGEKSDD. Residue K212 is modified to N6-acetyllysine. S220 is modified (phosphoserine). At S225 the chain carries Phosphoserine; by CK2. Position 240 is a phosphoserine; by CDK1 (S240). S244 and S248 each carry phosphoserine. Residues 248-264 are compositionally biased toward basic and acidic residues; it reads SPRENGLDKTRLLKKDA. The interval 250 to 427 is SP domain; the sequence is RENGLDKTRL…PGGKPAYSFH (178 aa). The residue at position 256 (K256) is an N6-acetyllysine. Over residues 265 to 280 the composition is skewed to low complexity; the sequence is PISPASVASSSSTPSS. S267 bears the Phosphoserine mark. Residues 292 to 303 show a composition bias toward polar residues; that stretch reads TTPVSKSNTPTP. T293 is modified (phosphothreonine). A phosphoserine mark is found at S296 and S298. Residues T300, T302, T309, and T315 each carry the phosphothreonine modification. Position 394 is a phosphoserine (S394). 7 WD repeats span residues 460-498, 506-545, 550-589, 592-631, 633-672, 674-713, and 715-748; these read NHGE…NKSP, NRDN…PRIK, SSAP…LVRQ, GHTD…QLQQ, DFTS…KYQL, LHES…SIFQ, and KESS…EVIY.

It belongs to the WD repeat Groucho/TLE family. Homooligomer and heterooligomer with other family members. Binds PAX5, LEF1, TCF7, TCF7L1 and TCF7L2. Interacts with ZNF703; TLE4 may mediate ZNF703 transcriptional repression. Interacts with SIX3 and SIX6. Interacts with PAX2. Post-translationally, phosphorylated. PAX5 binding increases phosphorylation. Ubiquitinated by XIAP/BIRC4.

It localises to the nucleus. Functionally, transcriptional corepressor that binds to a number of transcription factors. Inhibits the transcriptional activation mediated by PAX5, and by CTNNB1 and TCF family members in Wnt signaling. The effects of full-length TLE family members may be modulated by association with dominant-negative AES. Essential for the transcriptional repressor activity of SIX3 during retina and lens development and for SIX3 transcriptional auto-repression. Involved in transcriptional repression of GNRHR and enhances MSX1-mediated transcriptional repression of CGA/alpha-GSU. This chain is Transducin-like enhancer protein 4 (Tle4), found in Rattus norvegicus (Rat).